Consider the following 92-residue polypeptide: Putative lambdoid prophage defective integrase (92 aa).

The protein belongs to the 'phage' integrase family.

This is Putative lambdoid prophage defective integrase (intG) from Escherichia coli O157:H7.